The sequence spans 63 residues: ATP synthase F(0) complex subunit 8 (63 aa).

The helical transmembrane segment at Thr8–Phe24 threads the bilayer. Residue Lys57 is modified to N6-acetyllysine.

Belongs to the ATPase protein 8 family. In terms of assembly, component of the ATP synthase complex composed at least of ATP5F1A/subunit alpha, ATP5F1B/subunit beta, ATP5MC1/subunit c (homooctomer), MT-ATP6/subunit a, MT-ATP8/subunit 8, ATP5ME/subunit e, ATP5MF/subunit f, ATP5MG/subunit g, ATP5MK/subunit k, ATP5MJ/subunit j, ATP5F1C/subunit gamma, ATP5F1D/subunit delta, ATP5F1E/subunit epsilon, ATP5PF/subunit F6, ATP5PB/subunit b, ATP5PD/subunit d, ATP5PO/subunit OSCP. ATP synthase complex consists of a soluble F(1) head domain (subunits alpha(3) and beta(3)) - the catalytic core - and a membrane F(0) domain - the membrane proton channel (subunits c, a, 8, e, f, g, k and j). These two domains are linked by a central stalk (subunits gamma, delta, and epsilon) rotating inside the F1 region and a stationary peripheral stalk (subunits F6, b, d, and OSCP). Interacts with PRICKLE3.

Its subcellular location is the mitochondrion membrane. Its function is as follows. Subunit 8, of the mitochondrial membrane ATP synthase complex (F(1)F(0) ATP synthase or Complex V) that produces ATP from ADP in the presence of a proton gradient across the membrane which is generated by electron transport complexes of the respiratory chain. ATP synthase complex consist of a soluble F(1) head domain - the catalytic core - and a membrane F(1) domain - the membrane proton channel. These two domains are linked by a central stalk rotating inside the F(1) region and a stationary peripheral stalk. During catalysis, ATP synthesis in the catalytic domain of F(1) is coupled via a rotary mechanism of the central stalk subunits to proton translocation. In vivo, can only synthesize ATP although its ATP hydrolase activity can be activated artificially in vitro. Part of the complex F(0) domain. In Balaenoptera musculus (Blue whale), this protein is ATP synthase F(0) complex subunit 8.